The sequence spans 242 residues: Glucosamine-6-phosphate deaminase (242 aa).

Asp-67 serves as the catalytic Proton acceptor; for enolization step. Catalysis depends on Asn-137, which acts as the For ring-opening step. Residue His-139 is the Proton acceptor; for ring-opening step of the active site. The active-site For ring-opening step is Glu-144.

This sequence belongs to the glucosamine/galactosamine-6-phosphate isomerase family. NagB subfamily.

It catalyses the reaction alpha-D-glucosamine 6-phosphate + H2O = beta-D-fructose 6-phosphate + NH4(+). It participates in amino-sugar metabolism; N-acetylneuraminate degradation; D-fructose 6-phosphate from N-acetylneuraminate: step 5/5. Functionally, catalyzes the reversible isomerization-deamination of glucosamine 6-phosphate (GlcN6P) to form fructose 6-phosphate (Fru6P) and ammonium ion. The sequence is that of Glucosamine-6-phosphate deaminase from Staphylococcus haemolyticus (strain JCSC1435).